The following is a 214-amino-acid chain: tRNA (guanine-N(7)-)-methyltransferase (214 aa).

The S-adenosyl-L-methionine site is built by E44, D69, D96, and D118. The active site involves D118. K122 provides a ligand contact to substrate. An interaction with RNA region spans residues 124-129 (KHEKRR). Substrate contacts are provided by residues D154 and 191 to 194 (TEYE).

It belongs to the class I-like SAM-binding methyltransferase superfamily. TrmB family.

The catalysed reaction is guanosine(46) in tRNA + S-adenosyl-L-methionine = N(7)-methylguanosine(46) in tRNA + S-adenosyl-L-homocysteine. It participates in tRNA modification; N(7)-methylguanine-tRNA biosynthesis. Its function is as follows. Catalyzes the formation of N(7)-methylguanine at position 46 (m7G46) in tRNA. This Enterococcus faecalis (strain ATCC 700802 / V583) protein is tRNA (guanine-N(7)-)-methyltransferase.